Consider the following 416-residue polypeptide: Serine hydroxymethyltransferase (416 aa).

Residues Leu121 and 125 to 127 (GHL) contribute to the (6S)-5,6,7,8-tetrahydrofolate site. Lys229 carries the N6-(pyridoxal phosphate)lysine modification.

The protein belongs to the SHMT family. In terms of assembly, homodimer. Pyridoxal 5'-phosphate serves as cofactor.

The protein localises to the cytoplasm. It carries out the reaction (6R)-5,10-methylene-5,6,7,8-tetrahydrofolate + glycine + H2O = (6S)-5,6,7,8-tetrahydrofolate + L-serine. It functions in the pathway one-carbon metabolism; tetrahydrofolate interconversion. The protein operates within amino-acid biosynthesis; glycine biosynthesis; glycine from L-serine: step 1/1. Functionally, catalyzes the reversible interconversion of serine and glycine with tetrahydrofolate (THF) serving as the one-carbon carrier. This reaction serves as the major source of one-carbon groups required for the biosynthesis of purines, thymidylate, methionine, and other important biomolecules. Also exhibits THF-independent aldolase activity toward beta-hydroxyamino acids, producing glycine and aldehydes, via a retro-aldol mechanism. This is Serine hydroxymethyltransferase from Neisseria meningitidis serogroup C (strain 053442).